Reading from the N-terminus, the 389-residue chain is Odorant receptor 85c (389 aa).

Residues 1-33 (MKFMKYAVFFYTSVGIEPYTIDSRSKKASLWSH) are Cytoplasmic-facing. The helical transmembrane segment at 34 to 54 (LLFWANVINLSVIVFGEILYL) threads the bilayer. Over 55–66 (GVAYSDGKFIDA) the chain is Extracellular. Residues 67 to 87 (VTVLSYIGFVIVGMSKMFFIW) traverse the membrane as a helical segment. At 88–130 (WKKTDLSDLVKELEHIYPNGKAEEEMYRLDRYLRSCSRISITY) the chain is on the cytoplasmic side. A helical transmembrane segment spans residues 131–151 (ALLYSVLIWTFNLFSIMQFLV). Residues 152–199 (YEKLLKIRVVGQTLPYLMYFPWNWHENWTYYVLLFCQNFAGHTSASGQ) lie on the Extracellular side of the membrane. N-linked (GlcNAc...) asparagine glycosylation is present at Asn-178. The helical transmembrane segment at 200–220 (ISTDLLLCAVATQVVMHFDYL) threads the bilayer. Over 221-259 (ARVVEKQVLDRDWSENSRFLAKTVQYHQRILRLMDVLND) the chain is Cytoplasmic. Residues 260–280 (IFGIPLLLNFMVSTFVICFVG) form a helical membrane-spanning segment. At 281–290 (FQMTVGVPPD) the chain is on the extracellular side. A helical transmembrane segment spans residues 291-311 (IMIKLFLFLFSSLSQVYLICH). The Cytoplasmic portion of the chain corresponds to 312-359 (YGQLIADASSSLSISAYKQNWQNADIRYRRALVFFIARPQRTTYLKAT). Residues 360–380 (IFMNITRATMTDLLQVSYKFF) traverse the membrane as a helical segment. At 381–389 (ALLRTMYIK) the chain is on the extracellular side.

It belongs to the insect chemoreceptor superfamily. Heteromeric odorant receptor channel (TC 1.A.69) family. Or49a subfamily. As to quaternary structure, interacts with Orco. Complexes exist early in the endomembrane system in olfactory sensory neurons (OSNs), coupling these complexes to the conserved ciliary trafficking pathway.

The protein localises to the cell membrane. In terms of biological role, odorant receptor which mediates acceptance or avoidance behavior, depending on its substrates. The odorant receptor repertoire encodes a large collection of odor stimuli that vary widely in identity, intensity, and duration. May form a complex with Orco to form odorant-sensing units, providing sensitive and prolonged odorant signaling and calcium permeability. The polypeptide is Odorant receptor 85c (Or85c) (Drosophila melanogaster (Fruit fly)).